The chain runs to 261 residues: 5'-nucleotidase SurE (261 aa).

Positions 8, 9, 43, and 96 each coordinate a divalent metal cation.

This sequence belongs to the SurE nucleotidase family. Requires a divalent metal cation as cofactor.

Its subcellular location is the cytoplasm. It carries out the reaction a ribonucleoside 5'-phosphate + H2O = a ribonucleoside + phosphate. Nucleotidase that shows phosphatase activity on nucleoside 5'-monophosphates. The sequence is that of 5'-nucleotidase SurE from Cereibacter sphaeroides (strain ATCC 17023 / DSM 158 / JCM 6121 / CCUG 31486 / LMG 2827 / NBRC 12203 / NCIMB 8253 / ATH 2.4.1.) (Rhodobacter sphaeroides).